We begin with the raw amino-acid sequence, 87 residues long: Small ribosomal subunit protein uS15c (87 aa).

Belongs to the universal ribosomal protein uS15 family. As to quaternary structure, part of the 30S ribosomal subunit.

Its subcellular location is the plastid. The protein resides in the chloroplast. This is Small ribosomal subunit protein uS15c (rps15) from Solanum bulbocastanum (Wild potato).